The primary structure comprises 378 residues: Carbamoyl phosphate synthase small chain (378 aa).

Positions Met-1 to Lys-188 are CPSase. Residues Ser-50, Gly-240, and Gly-242 each coordinate L-glutamine. Positions His-192–Gln-378 constitute a Glutamine amidotransferase type-1 domain. Residue Cys-268 is the Nucleophile of the active site. Positions 269, 272, 310, 312, and 313 each coordinate L-glutamine. Active-site residues include His-352 and Glu-354.

The protein belongs to the CarA family. As to quaternary structure, composed of two chains; the small (or glutamine) chain promotes the hydrolysis of glutamine to ammonia, which is used by the large (or ammonia) chain to synthesize carbamoyl phosphate. Tetramer of heterodimers (alpha,beta)4.

It carries out the reaction hydrogencarbonate + L-glutamine + 2 ATP + H2O = carbamoyl phosphate + L-glutamate + 2 ADP + phosphate + 2 H(+). It catalyses the reaction L-glutamine + H2O = L-glutamate + NH4(+). It functions in the pathway amino-acid biosynthesis; L-arginine biosynthesis; carbamoyl phosphate from bicarbonate: step 1/1. Its pathway is pyrimidine metabolism; UMP biosynthesis via de novo pathway; (S)-dihydroorotate from bicarbonate: step 1/3. Small subunit of the glutamine-dependent carbamoyl phosphate synthetase (CPSase). CPSase catalyzes the formation of carbamoyl phosphate from the ammonia moiety of glutamine, carbonate, and phosphate donated by ATP, constituting the first step of 2 biosynthetic pathways, one leading to arginine and/or urea and the other to pyrimidine nucleotides. The small subunit (glutamine amidotransferase) binds and cleaves glutamine to supply the large subunit with the substrate ammonia. This Ralstonia nicotianae (strain ATCC BAA-1114 / GMI1000) (Ralstonia solanacearum) protein is Carbamoyl phosphate synthase small chain.